Reading from the N-terminus, the 478-residue chain is ATP synthase subunit beta (478 aa).

G151–T158 serves as a coordination point for ATP.

This sequence belongs to the ATPase alpha/beta chains family. As to quaternary structure, F-type ATPases have 2 components, CF(1) - the catalytic core - and CF(0) - the membrane proton channel. CF(1) has five subunits: alpha(3), beta(3), gamma(1), delta(1), epsilon(1). CF(0) has three main subunits: a(1), b(2) and c(9-12). The alpha and beta chains form an alternating ring which encloses part of the gamma chain. CF(1) is attached to CF(0) by a central stalk formed by the gamma and epsilon chains, while a peripheral stalk is formed by the delta and b chains.

It is found in the cell inner membrane. It carries out the reaction ATP + H2O + 4 H(+)(in) = ADP + phosphate + 5 H(+)(out). Functionally, produces ATP from ADP in the presence of a proton gradient across the membrane. The catalytic sites are hosted primarily by the beta subunits. This chain is ATP synthase subunit beta, found in Azorhizobium caulinodans (strain ATCC 43989 / DSM 5975 / JCM 20966 / LMG 6465 / NBRC 14845 / NCIMB 13405 / ORS 571).